The sequence spans 157 residues: uncharacterized protein (157 aa).

One can recognise an N-acetyltransferase domain in the interval 9-146; it reads LLINYKTLDE…GDFYVWHPET (138 aa).

This is an uncharacterized protein from Bacillus cereus (strain ZK / E33L).